A 477-amino-acid chain; its full sequence is Spliceosome-associated protein CWC27 homolog (477 aa).

The PPIase cyclophilin-type domain maps to 11 to 166; the sequence is SNGKVLLKTT…NPHKIKCTEV (156 aa). Disordered regions lie at residues 203 to 355 and 401 to 477; these read LLSF…AENT and TQAI…KERR. Acidic residues predominate over residues 208–218; sequence EEAEEDEEEVN. 2 stretches are compositionally biased toward basic and acidic residues: residues 230–240 and 247–258; these read SSHDLLKDDPR and VEREKDSQSADS. The segment covering 259-279 has biased composition (acidic residues); that stretch reads DKDEDEMSDDDDEEEDDEMDS. Composition is skewed to basic and acidic residues over residues 280–299, 311–353, and 430–442; these read DEKH…DPSK, EERK…KEAE, and QFEE…KDAN. The stretch at 308–381 forms a coiled coil; the sequence is DEAEERKSSR…EEVRKKNTNK (74 aa).

It belongs to the cyclophilin-type PPIase family. As to quaternary structure, part of the activated spliceosome B/catalytic step 1 spliceosome, one of the forms of the spliceosome which has a well-formed active site but still cannot catalyze the branching reaction and is composed at least of 52 proteins, the U2, U5 and U6 snRNAs and the pre-mRNA. Recruited during early steps of activated spliceosome B maturation, it is probably one of the first proteins released from this complex as he matures to the spliceosome C complex. Component of the minor spliceosome, which splices U12-type introns.

It localises to the nucleus. As part of the spliceosome, plays a role in pre-mRNA splicing. Probable inactive PPIase with no peptidyl-prolyl cis-trans isomerase activity. The sequence is that of Spliceosome-associated protein CWC27 homolog (cwc27) from Xenopus laevis (African clawed frog).